We begin with the raw amino-acid sequence, 318 residues long: Ornithine carbamoyltransferase (318 aa).

Residues 63–66 (STRT), Q90, R114, and 141–144 (HPCQ) each bind carbamoyl phosphate. L-ornithine contacts are provided by residues N172, D235, and 239–240 (SM). Residues 275-276 (CL) and R303 contribute to the carbamoyl phosphate site.

The protein belongs to the aspartate/ornithine carbamoyltransferase superfamily. OTCase family.

It localises to the cytoplasm. The enzyme catalyses carbamoyl phosphate + L-ornithine = L-citrulline + phosphate + H(+). Its pathway is amino-acid biosynthesis; L-arginine biosynthesis; L-arginine from L-ornithine and carbamoyl phosphate: step 1/3. Functionally, reversibly catalyzes the transfer of the carbamoyl group from carbamoyl phosphate (CP) to the N(epsilon) atom of ornithine (ORN) to produce L-citrulline. This Prochlorococcus marinus (strain MIT 9313) protein is Ornithine carbamoyltransferase.